The sequence spans 249 residues: Eukaryotic translation initiation factor 3 subunit J-A (249 aa).

The span at 1–15 shows a compositional bias: acidic residues; it reads MADADSWDADSFEPE. The tract at residues 1–104 is disordered; the sequence is MADADSWDAD…DTPLTPEDEL (104 aa). Residues 16-27 are compositionally biased toward basic and acidic residues; the sequence is EPIKKAAVHDKW. Residues 28–52 show a composition bias toward acidic residues; that stretch reads EGEDEDDDVKDNWDDDEEEEKEEEE. The stretch at 34 to 96 forms a coiled coil; the sequence is DDVKDNWDDD…QQLEETKRDT (63 aa). A compositionally biased stretch (basic and acidic residues) spans 53–96; that stretch reads EKKTEAKPTEKKKLSEKIKEKENLQRKKQEELRKQQLEETKRDT.

Belongs to the eIF-3 subunit J family. As to quaternary structure, component of the eukaryotic translation initiation factor 3 (eIF-3) complex, which is composed of 13 subunits: eif3a, eif3b, eif3c, eif3d, eif3e, eif3f, eif3g, eif3h, eif3i, eif3j, eif3k, eif3l and eif3m.

The protein localises to the cytoplasm. Functionally, component of the eukaryotic translation initiation factor 3 (eIF-3) complex, which is involved in protein synthesis of a specialized repertoire of mRNAs and, together with other initiation factors, stimulates binding of mRNA and methionyl-tRNAi to the 40S ribosome. The eIF-3 complex specifically targets and initiates translation of a subset of mRNAs involved in cell proliferation. This Danio rerio (Zebrafish) protein is Eukaryotic translation initiation factor 3 subunit J-A (eif3ja).